Here is a 252-residue protein sequence, read N- to C-terminus: Hydroxyacylglutathione hydrolase (252 aa).

His54, His56, Asp58, His59, His113, Asp132, and His170 together coordinate Zn(2+).

It belongs to the metallo-beta-lactamase superfamily. Glyoxalase II family. Monomer. It depends on Zn(2+) as a cofactor.

The catalysed reaction is an S-(2-hydroxyacyl)glutathione + H2O = a 2-hydroxy carboxylate + glutathione + H(+). The protein operates within secondary metabolite metabolism; methylglyoxal degradation; (R)-lactate from methylglyoxal: step 2/2. Its function is as follows. Thiolesterase that catalyzes the hydrolysis of S-D-lactoyl-glutathione to form glutathione and D-lactic acid. The protein is Hydroxyacylglutathione hydrolase of Gloeobacter violaceus (strain ATCC 29082 / PCC 7421).